The sequence spans 440 residues: MGALLAKWRAKPSTVEVLEKMEKDIQSLEEFRDKNQKLRKIWVARLFFYSTILYILTSLTVYLWYLPGGMTARLLTTLLFLLFPVLIWFVRTLLILWFSRRTERNNDALELLKAEKKKILEEVMEKETYKAAKIILERFDPDSRKIKELELPVPGPPITPRPGQDLRQRTAAQRNISVSTPVNPGQGSPQVSGLLAATPALQRDTSAPGGPPERSVQPTPQSNILQRRPGSPATAVSGMALHPPGPPLARPILPRERGAMDRVIEYLVGDGPQNRYALICQQCFSHNGMALKEEFEYVAFRCAYCYFLNPARKTRPQAPRLQEISFDRQRQRTDSQGSVNTLQLPAADQLENQQSPEAMEEDSPAQAEEQAIEEQVIEEQVTEEQLIEDQVIEEDSTCSEQQWEEAPDDTEKDNLPAAEVNPSLPAPAANESEESFMETE.

Topologically, residues 1–45 (MGALLAKWRAKPSTVEVLEKMEKDIQSLEEFRDKNQKLRKIWVAR) are cytoplasmic. Positions 16 to 40 (EVLEKMEKDIQSLEEFRDKNQKLRK) form a coiled coil. The helical transmembrane segment at 46–66 (LFFYSTILYILTSLTVYLWYL) threads the bilayer. Residues 67–77 (PGGMTARLLTT) lie on the Lumenal side of the membrane. Residues 78–98 (LLFLLFPVLIWFVRTLLILWF) form a helical membrane-spanning segment. Topologically, residues 99 to 440 (SRRTERNNDA…ESEESFMETE (342 aa)) are cytoplasmic. A coiled-coil region spans residues 100–128 (RRTERNNDALELLKAEKKKILEEVMEKET). Positions 149 to 169 (LELPVPGPPITPRPGQDLRQR) are disordered. Threonine 159 carries the phosphothreonine modification. Residues serine 177, serine 179, serine 188, and serine 192 each carry the phosphoserine modification. A Phosphothreonine modification is found at threonine 198. Positions 202–247 (QRDTSAPGGPPERSVQPTPQSNILQRRPGSPATAVSGMALHPPGPP) are disordered. Phosphoserine occurs at positions 206 and 215. Over residues 216–225 (VQPTPQSNIL) the composition is skewed to polar residues. A Phosphothreonine modification is found at threonine 219. Phosphoserine occurs at positions 222 and 231. A C4-type; plays a role in ER morphology zinc finger spans residues 280-305 (CQQCFSHNGMALKEEFEYVAFRCAYC). Residues 316–440 (PQAPRLQEIS…ESEESFMETE (125 aa)) are disordered. Serine 325 is subject to Phosphoserine. Residues 334–343 (DSQGSVNTLQ) are compositionally biased toward polar residues. Acidic residues-rich tracts occupy residues 370–411 (QAIE…DDTE) and 431–440 (ESEESFMETE).

Belongs to the lunapark family. In terms of assembly, homodimer; homodimerization requires the C4-type zinc finger motif and decreases during mitosis in a phosphorylation-dependent manner. Post-translationally, phosphorylated. Phosphorylation at Thr-159 and Ser-325 occurs during interphase. Phosphorylation at Ser-177, Ser-179, Ser-188, Ser-192, Thr-198, Ser-206, Ser-215, Thr-219, Ser-222 and Ser-231 occurs during mitosis; these phosphorylations reduce both its homodimerization and the ER three-way tubular junction formation.

It is found in the endoplasmic reticulum membrane. In terms of biological role, endoplasmic reticulum (ER)-shaping membrane protein that plays a role in determining ER morphology. Involved in the stabilization of nascent three-way ER tubular junctions within the ER network. May also play a role as a curvature-stabilizing protein within three-way ER tubular junction network. This Xenopus laevis (African clawed frog) protein is Endoplasmic reticulum junction formation protein lunapark (lnpk).